The sequence spans 155 residues: Ribonuclease H (155 aa).

Positions 4-145 constitute an RNase H type-1 domain; sequence TEPTVYAYTD…ADRLANRGID (142 aa). D13, E51, D73, and D137 together coordinate Mg(2+).

Belongs to the RNase H family. As to quaternary structure, monomer. Mg(2+) is required as a cofactor.

It localises to the cytoplasm. It carries out the reaction Endonucleolytic cleavage to 5'-phosphomonoester.. Endonuclease that specifically degrades the RNA of RNA-DNA hybrids. This Methylococcus capsulatus (strain ATCC 33009 / NCIMB 11132 / Bath) protein is Ribonuclease H.